The following is a 348-amino-acid chain: Phenylalanine--tRNA ligase alpha subunit (348 aa).

Glu259 contributes to the Mg(2+) binding site.

The protein belongs to the class-II aminoacyl-tRNA synthetase family. Phe-tRNA synthetase alpha subunit type 1 subfamily. In terms of assembly, tetramer of two alpha and two beta subunits. Mg(2+) serves as cofactor.

The protein resides in the cytoplasm. It catalyses the reaction tRNA(Phe) + L-phenylalanine + ATP = L-phenylalanyl-tRNA(Phe) + AMP + diphosphate + H(+). In Ligilactobacillus salivarius (strain UCC118) (Lactobacillus salivarius), this protein is Phenylalanine--tRNA ligase alpha subunit.